Here is a 101-residue protein sequence, read N- to C-terminus: NAD(P)H-quinone oxidoreductase subunit 4L, chloroplastic (101 aa).

3 helical membrane-spanning segments follow: residues 2–22, 32–52, and 61–81; these read ILEH…YGLI, MCLE…SDFF, and IFCI…LAIV.

Belongs to the complex I subunit 4L family. NDH is composed of at least 16 different subunits, 5 of which are encoded in the nucleus.

It localises to the plastid. The protein resides in the chloroplast thylakoid membrane. The catalysed reaction is a plastoquinone + NADH + (n+1) H(+)(in) = a plastoquinol + NAD(+) + n H(+)(out). It catalyses the reaction a plastoquinone + NADPH + (n+1) H(+)(in) = a plastoquinol + NADP(+) + n H(+)(out). In terms of biological role, NDH shuttles electrons from NAD(P)H:plastoquinone, via FMN and iron-sulfur (Fe-S) centers, to quinones in the photosynthetic chain and possibly in a chloroplast respiratory chain. The immediate electron acceptor for the enzyme in this species is believed to be plastoquinone. Couples the redox reaction to proton translocation, and thus conserves the redox energy in a proton gradient. In Olimarabidopsis pumila (Dwarf rocket), this protein is NAD(P)H-quinone oxidoreductase subunit 4L, chloroplastic.